A 292-amino-acid polypeptide reads, in one-letter code: MPSLKDLRNRIASVKATQKITKAMQMVAAAKLRRAQEAAEAARPYSQRMGAVLANIAQNVSGEDAPALMVGTGKDNVHLLVVCTAERGLCGGFNSQIARLARDHARKLLAEGKTVKIITVGKKGADILRREFSALLHDHVDLREVKQLAFVHADQIGHKIIKLFEEGAFDVCTLFYSEFKSVISQVPTAQQLIPASADNEAEMETAGDAIYEYEPDPAAILSTLIPRNISVQIFRALLENVAGEMGAKMSAMDNATRNAGDMINKLSITYNRQRQAQITKELIEIISGAEAL.

The protein belongs to the ATPase gamma chain family. As to quaternary structure, F-type ATPases have 2 components, CF(1) - the catalytic core - and CF(0) - the membrane proton channel. CF(1) has five subunits: alpha(3), beta(3), gamma(1), delta(1), epsilon(1). CF(0) has three main subunits: a, b and c.

Its subcellular location is the cell inner membrane. In terms of biological role, produces ATP from ADP in the presence of a proton gradient across the membrane. The gamma chain is believed to be important in regulating ATPase activity and the flow of protons through the CF(0) complex. The polypeptide is ATP synthase gamma chain (Brucella canis (strain ATCC 23365 / NCTC 10854 / RM-666)).